The sequence spans 242 residues: Probable ABC transporter ATP-binding protein PEB1C (242 aa).

The region spanning 2–236 is the ABC transporter domain; the sequence is IELKNVNKYY…PKTERARLFL (235 aa). Residue 34 to 41 coordinates ATP; the sequence is GPSGSGKS.

This sequence belongs to the ABC transporter superfamily.

The protein localises to the cell inner membrane. Most probably involved, with PEB1, in a binding-protein-dependent transport system for an amino acid. Probably responsible for energy coupling to the transport system. This Campylobacter jejuni subsp. jejuni serotype O:2 (strain ATCC 700819 / NCTC 11168) protein is Probable ABC transporter ATP-binding protein PEB1C (peb1C).